Reading from the N-terminus, the 108-residue chain is uncharacterized protein (108 aa).

3 helical membrane passes run 36–56 (LAIM…DKMI), 58–78 (FIFV…KLLF), and 88–108 (IVFL…FFNL).

The protein localises to the cell membrane. This is an uncharacterized protein from Alkalihalophilus pseudofirmus (strain ATCC BAA-2126 / JCM 17055 / OF4) (Bacillus pseudofirmus).